The chain runs to 927 residues: 2-oxoadipate dehydrogenase complex component E1 (927 aa).

The protein belongs to the alpha-ketoglutarate dehydrogenase family. The 2-oxoadipate dehydrogenase complex is composed of OADH (2-oxoadipate dehydrogenase; E1a), DLST (dihydrolipoamide succinyltransferase; E2) and DLD (dihydrolipoamide dehydrogenase; E3). E1a functional unit is a dimer. Thiamine diphosphate is required as a cofactor.

It is found in the mitochondrion. It carries out the reaction N(6)-[(R)-lipoyl]-L-lysyl-[protein] + 2-oxoadipate + H(+) = N(6)-[(R)-S(8)-glutaryldihydrolipoyl]-L-lysyl-[protein] + CO2. The protein operates within amino-acid degradation. Functionally, 2-oxoadipate dehydrogenase (E1a) component of the 2-oxoadipate dehydrogenase complex (OADHC). Participates in the first step, rate limiting for the overall conversion of 2-oxoadipate (alpha-ketoadipate) to glutaryl-CoA and CO(2) catalyzed by the whole OADHC. Catalyzes the irreversible decarboxylation of 2-oxoadipate via the thiamine diphosphate (ThDP) cofactor and subsequent transfer of the decarboxylated acyl intermediate on an oxidized dihydrolipoyl group that is covalently amidated to the E2 enzyme (dihydrolipoyllysine-residue succinyltransferase or DLST). Can catalyze the decarboxylation of 2-oxoglutarate in vitro, but at a much lower rate than 2-oxoadipate. Responsible for the last step of L-lysine, L-hydroxylysine and L-tryptophan catabolism with the common product being 2-oxoadipate. This chain is 2-oxoadipate dehydrogenase complex component E1 (dhtkd1), found in Xenopus laevis (African clawed frog).